Here is a 352-residue protein sequence, read N- to C-terminus: Molybdenum import ATP-binding protein ModC (352 aa).

An ABC transporter domain is found at 1–229; sequence MLQLDFHQQL…SALRPWLPKD (229 aa). 31-38 is a binding site for ATP; the sequence is GVSGAGKT. Residues 289-352 enclose the Mop domain; sequence KSSIRNVLRA…AQIKSVSITA (64 aa).

Belongs to the ABC transporter superfamily. Molybdate importer (TC 3.A.1.8) family. The complex is composed of two ATP-binding proteins (ModC), two transmembrane proteins (ModB) and a solute-binding protein (ModA).

The protein resides in the cell inner membrane. The catalysed reaction is molybdate(out) + ATP + H2O = molybdate(in) + ADP + phosphate + H(+). Its function is as follows. Part of the ABC transporter complex ModABC involved in molybdenum import. Responsible for energy coupling to the transport system. The chain is Molybdenum import ATP-binding protein ModC from Pectobacterium atrosepticum (strain SCRI 1043 / ATCC BAA-672) (Erwinia carotovora subsp. atroseptica).